We begin with the raw amino-acid sequence, 609 residues long: Actin-interacting protein 1-2 (609 aa).

WD repeat units follow at residues 2-42, 54-93, 97-141, 142-182, 185-224, 230-269, 277-318, 322-362, 445-484, 489-528, 532-571, and 576-609; these read ELSE…VTLD, EHAYPATVARYSPNGEWIASGDVSGTVRIWGAYNDHVLKN, VLAG…GEFD, GHSR…FKLS, EHSNFVNCVRFAPDGSKFITVSSDKKGIIYDGKTCEILGE, GHKGSIYAVSWSPDGKQVLTVSADKSAKIWDISDNGSGSL, GSSG…KSPF, GHMK…CGKL, NLGFIVTALAVTPDGTEAVIGGQDGKLHLYSINGDSLTEE, RHRGAISVIRYSPDLSMFASADLNREAVVWDRVSREMKLK, YHSARINCLAWSPNSTMVATGSLDTCVIVYEVDKPASSRM, and AHLGGVYGLGFADDSHVVSSGEDACIRVWSFTPQ.

Expressed in leaves, stems, flower buds and flowers.

In terms of biological role, binds actin. Enhances the F-actin depolymerization activity of actin-depolymerizing factor (ADF) proteins. The polypeptide is Actin-interacting protein 1-2 (Arabidopsis thaliana (Mouse-ear cress)).